The sequence spans 493 residues: Leucine-rich repeat-containing protein 14 (493 aa).

The LRR 1; degenerate repeat unit spans residues 111–146 (KHALRVLDMTGLLDDGVEQDPGTMSMWDCTAAVART). Residues 194 to 218 (RLCCRDLRAEDLPMRNTVALLQLLD) form an LRR 2; degenerate repeat. One copy of the LRR 3; degenerate repeat lies at 219–246 (AGCLRRVDLRFNNLGLRGLSVIIPHVAR). Residues 247-282 (FQHLASLRLHYVHGDSRQPSVDGEDNFRYFLAQMGR) form an LRR 4; degenerate repeat. LRR repeat units follow at residues 283 to 307 (FTCL…LSTL), 308 to 339 (QSPL…AHLK), 340 to 360 (KLDL…QGLL), 364 to 391 (AATL…ILTQ), and 392 to 416 (CASL…LLRD).

The protein belongs to the PRAME family. LRRC14 subfamily. As to quaternary structure, interacts with IKBKB; disrupts IKBKB-IKBKG interaction preventing I-kappa-B-kinase (IKK) core complex formation and leading to a decrease of IKBKB phosphorylation and NF-kappaB activation. Interacts with CHUK.

The protein localises to the cytoplasm. In terms of biological role, negatively regulates Toll-like receptor-mediated NF-kappa-B signaling by disrupting IKK core complex formation through interaction with IKBKB. In Homo sapiens (Human), this protein is Leucine-rich repeat-containing protein 14.